The primary structure comprises 207 residues: Ras-related protein Rab-8A (207 aa).

GTP is bound by residues Ser17, Gly18, Val19, Gly20, Lys21, Thr22, Cys23, Ser35, Ser39, and Thr40. Thr22 contributes to the Mg(2+) binding site. Short sequence motifs (switch) lie at residues 31–45 (DAFNSTFISTIGIDF) and 63–80 (DTAGQERFRTITTAYYRG). Thr40 and Asp63 together coordinate Mg(2+). Gly66 is a GTP binding site. Thr72 carries the post-translational modification Phosphothreonine; by LRRK2. Residues Asn121, Lys122, Asp124, Ala152, and Lys153 each coordinate GTP. Residues Ser181 and Ser185 each carry the phosphoserine modification. Cys204 carries the cysteine methyl ester modification. Cys204 carries the S-geranylgeranyl cysteine lipid modification. Residues 205 to 207 (SLL) constitute a propeptide, removed in mature form.

This sequence belongs to the small GTPase superfamily. Rab family. In terms of assembly, interacts (GTP-bound form) with MICALL1; regulates RAB8A association with recycling endosomes. Interacts with MICALL2; competes with RAB13 and is involved in E-cadherin endocytic recycling. Interacts (GTP-bound form) with MICAL1, MICALCL, MICAL3 and EHBP1L1; two molecules of RAB8A can bind to one molecule of the effector protein; ternary complexes of RAB8A, RAB13 and either MICAL1 or EHBP1L1 are possible. Interacts (GTP-bound form) with EHBP1. Interacts with EHD1. Interacts with MAP4K2 and SYTL4. Interacts with SGSM1 and SGSM3. Interacts with RABIF, RIMS2, RPH3A and RPH3A. Interacts with OPTN. Interacts with MYO5B. Interacts with CIMAP3. Interacts with BIRC6/bruce. Interacts with OCRL. Interacts with AHI1. Interacts with DCDC1. Interacts with LRRK2; interaction facilitates phosphorylation of Thr-72. Interacts with RAB31P, GDI1, GDI2, CHM, CHML, RABGGTA, RABGGTB, TBC1D15 and INPP5B; these interactions are dependent on Thr-72 not being phosphorylated. Interacts with RILPL1 and RILPL2; these interactions are dependent on the phosphorylation of Thr-72 by LRRK2. Interacts with DZIP1; prevents inhibition by the GDP-dissociation inhibitor GDI2. Interacts with RAB3IP/Rabin8, RAB3IP functions as guanine exchange factor (GEF) towards RAB8A. Interacts (in GDP-bound form) with RPGR, RPGR functions as GEF towards RAB8A. Mg(2+) serves as cofactor. Post-translationally, phosphorylation of Thr-72 in the switch II region by LRRK2 prevents the association of RAB regulatory proteins, including CHM, CHML and RAB GDP dissociation inhibitors GDI1 and GDI2. Phosphorylation by LRRK2 is required for localization to stressed lysosomes.

The protein resides in the cell membrane. Its subcellular location is the golgi apparatus. It is found in the endosome membrane. The protein localises to the recycling endosome membrane. It localises to the cell projection. The protein resides in the cilium. Its subcellular location is the cytoplasmic vesicle. It is found in the phagosome membrane. The protein localises to the cytoplasm. It localises to the cytoskeleton. The protein resides in the microtubule organizing center. Its subcellular location is the centrosome. It is found in the centriole. The protein localises to the cilium basal body. It localises to the midbody. The protein resides in the lysosome. The catalysed reaction is GTP + H2O = GDP + phosphate + H(+). Its activity is regulated as follows. Regulated by guanine nucleotide exchange factors (GEFs) such as RAB3IP/Rabin8 and RPGR which promote the exchange of bound GDP for free GTP, GTPase activating proteins (GAPs) which increase the GTP hydrolysis activity, and GDP dissociation inhibitors (GDIs) which inhibit the dissociation of the nucleotide from the GTPase. Activated in response to insulin. In terms of biological role, the small GTPases Rab are key regulators of intracellular membrane trafficking, from the formation of transport vesicles to their fusion with membranes. Rabs cycle between an inactive GDP-bound form and an active GTP-bound form that is able to recruit to membranes different sets of downstream effectors directly responsible for vesicle formation, movement, tethering and fusion. RAB8A is involved in polarized vesicular trafficking and neurotransmitter release. Together with RAB11A, RAB3IP, the exocyst complex, PARD3, PRKCI, ANXA2, CDC42 and DNMBP promotes transcytosis of PODXL to the apical membrane initiation sites (AMIS), apical surface formation and lumenogenesis. Regulates the compacted morphology of the Golgi. Together with MYO5B and RAB11A participates in epithelial cell polarization. Also involved in membrane trafficking to the cilium and ciliogenesis. Together with MICALL2, may also regulate adherens junction assembly. May play a role in insulin-induced transport to the plasma membrane of the glucose transporter GLUT4 and therefore play a role in glucose homeostasis. Involved in autophagy. Participates in the export of a subset of neosynthesized proteins through a Rab8-Rab10-Rab11-dependent endososomal export route. Targeted to and stabilized on stressed lysosomes through LRRK2 phosphorylation. Suppresses stress-induced lysosomal enlargement through EHBP1 and EHNP1L1 effector proteins. The chain is Ras-related protein Rab-8A from Mus musculus (Mouse).